The primary structure comprises 298 residues: ATP synthase gamma chain (298 aa).

It belongs to the ATPase gamma chain family. As to quaternary structure, F-type ATPases have 2 components, CF(1) - the catalytic core - and CF(0) - the membrane proton channel. CF(1) has five subunits: alpha(3), beta(3), gamma(1), delta(1), epsilon(1). CF(0) has three main subunits: a, b and c.

The protein resides in the cell inner membrane. Functionally, produces ATP from ADP in the presence of a proton gradient across the membrane. The gamma chain is believed to be important in regulating ATPase activity and the flow of protons through the CF(0) complex. This chain is ATP synthase gamma chain, found in Bacteroides thetaiotaomicron (strain ATCC 29148 / DSM 2079 / JCM 5827 / CCUG 10774 / NCTC 10582 / VPI-5482 / E50).